Consider the following 328-residue polypeptide: Acyl-CoA wax alcohol acyltransferase 1 (328 aa).

Transmembrane regions (helical) follow at residues 12-32 and 34-53; these read SLSL…VQPL and ICLL…VWLL.

This sequence belongs to the diacylglycerol acyltransferase family.

The protein resides in the endoplasmic reticulum membrane. The catalysed reaction is a long chain fatty alcohol + a fatty acyl-CoA = a wax ester + CoA. It carries out the reaction 1,2-di-(9Z-octadecenoyl)-sn-glycerol + (9Z)-octadecenoyl-CoA = 1,2,3-tri-(9Z-octadecenoyl)-glycerol + CoA. The enzyme catalyses hexadecan-1-ol + (9Z)-octadecenoyl-CoA = hexadecanyl (9Z)-octadecenoate + CoA. It catalyses the reaction decan-1-ol + (9Z)-octadecenoyl-CoA = 1-O-decyl-(9Z)-octadecenoate + CoA. The catalysed reaction is (9Z)-hexadecen-1-ol + (9Z)-octadecenoyl-CoA = 1-O-(9Z)-hexadecenyl (9Z)-octadecenoate + CoA. It carries out the reaction octadecan-1-ol + (9Z)-octadecenoyl-CoA = 1-O-octadecyl (9Z)-octadecenoate + CoA. The enzyme catalyses (9Z)-octadecen-1-ol + (9Z)-octadecenoyl-CoA = 1-O-(9Z)-octadecenyl (9Z)-octadecenoate + CoA. It catalyses the reaction hexadecan-1-ol + hexadecanoyl-CoA = hexadecanyl hexadecanoate + CoA. The catalysed reaction is hexadecan-1-ol + (9Z)-hexadecenoyl-CoA = 1-O-hexadecyl (9Z)-hexadecenoate + CoA. It carries out the reaction hexadecan-1-ol + octadecanoyl-CoA = hexadecanyl octadecanoate + CoA. The enzyme catalyses eicosan-1-ol + (9Z)-octadecenoyl-CoA = 1-O-eicosanyl (9Z)-octadecenoate + CoA. In terms of biological role, acyltransferase that catalyzes the formation of ester bonds between fatty alcohols and fatty acyl-CoAs to form wax monoesters. Shows a strong preference for decyl alcohol (C10), with less activity towards C16 and C18 alcohols. Shows a strong preference for saturated acyl-CoAs. This is Acyl-CoA wax alcohol acyltransferase 1 (Awat1) from Mus musculus (Mouse).